Here is a 378-residue protein sequence, read N- to C-terminus: 3-hydroxyisobutyryl-CoA hydrolase 1 (378 aa).

Ala2 carries the post-translational modification N-acetylalanine. 4 residues coordinate substrate: Glu94, Gly119, Glu142, and Asp150.

This sequence belongs to the enoyl-CoA hydratase/isomerase family. In terms of tissue distribution, expressed in roots, leaves, flowers and siliques.

It localises to the peroxisome. It catalyses the reaction 3-hydroxy-2-methylpropanoyl-CoA + H2O = 3-hydroxy-2-methylpropanoate + CoA + H(+). The protein operates within amino-acid degradation; L-valine degradation. Its activity is regulated as follows. Inhibited by copper. Functionally, involved in valine catabolism. May be indirectly involved in benzoic acid biosynthesis and in cold signaling and cold tolerance. The protein is 3-hydroxyisobutyryl-CoA hydrolase 1 (CHY1) of Arabidopsis thaliana (Mouse-ear cress).